Consider the following 239-residue polypeptide: Diablo IAP-binding mitochondrial protein (239 aa).

The transit peptide at 1-21 directs the protein to the mitochondrion; the sequence is MAALKSWLSRSVTSFFRYRQC. The short motif at 56 to 60 is the IAP-binding element; it reads AVPIA. Positions 217 to 239 are disordered; that stretch reads RQKTQEEGEERAESEQEAYLRED.

It belongs to the Smac/DIABLO protein family. As to quaternary structure, homodimer. Interacts with BIRC2/c-IAP1 (via BIR3 domain). Interacts with BIRC6/BRUCE; inhibits BIRC6 activity. Interacts with BIRC7/livin. Interacts with XIAP/BIRC4 (via BIR3 domain). Interacts with the monomeric and dimeric form of BIRC5/survivin. Interacts with AREL1 (via HECT domain); in the cytoplasm following induction of apoptosis. Interacts with BEX3. In terms of processing, ubiquitinated by BIRC7/livin. Ubiquitinated by BIRC6. Post-translationally, the precursor form is proteolytically cleaved by mitochondrial processing peptidase MPP to remove the transit peptide and produce an intermediate form. This is then processed by PARL to produce the mature cleaved form which is released from mitochondria into the cytosol in apoptotic cells. As to expression, ubiquitously expressed with highest expression in testis. Expression is also high in heart, liver, kidney, spleen, prostate and ovary. Low in brain, lung, thymus and peripheral blood leukocytes. Isoform 3 is ubiquitously expressed.

The protein localises to the mitochondrion. The protein resides in the cytoplasm. It localises to the cytosol. In terms of biological role, promotes apoptosis by activating caspases in the cytochrome c/Apaf-1/caspase-9 pathway. Acts by opposing the inhibitory activity of inhibitor of apoptosis proteins (IAP). Inhibits the activity of BIRC6/BRUCE by inhibiting its binding to caspases. Functionally, attenuates the stability and apoptosis-inhibiting activity of XIAP/BIRC4 by promoting XIAP/BIRC4 ubiquitination and degradation through the ubiquitin-proteasome pathway. Also disrupts XIAP/BIRC4 interacting with processed caspase-9 and promotes caspase-3 activation. Defective in the capacity to down-regulate the XIAP/BIRC4 abundance. This chain is Diablo IAP-binding mitochondrial protein, found in Homo sapiens (Human).